A 475-amino-acid chain; its full sequence is Chromosomal replication initiator protein DnaA (475 aa).

Residues 1–73 form a domain I, interacts with DnaA modulators region; the sequence is MTNSEQERWS…LSCWQAEMPE (73 aa). The tract at residues 73–131 is domain II; the sequence is EVHRIDLSVRTAMRCATPAKEAPVAVEARRAERGDAKPADTRAPVMTPVAASHDALGGS. The domain III, AAA+ region stretch occupies residues 132 to 354; that stretch reads PLDPRLTFAS…GAINRLLAHS (223 aa). Residues Gly179, Gly181, Lys182, and Thr183 each coordinate ATP. Residues 355–475 form a domain IV, binds dsDNA region; sequence KLNNQPVTLD…VEALKRQLQD (121 aa).

This sequence belongs to the DnaA family. Oligomerizes as a right-handed, spiral filament on DNA at oriC.

Its subcellular location is the cytoplasm. Functionally, plays an essential role in the initiation and regulation of chromosomal replication. ATP-DnaA binds to the origin of replication (oriC) to initiate formation of the DNA replication initiation complex once per cell cycle. Binds the DnaA box (a 9 base pair repeat at the origin) and separates the double-stranded (ds)DNA. Forms a right-handed helical filament on oriC DNA; dsDNA binds to the exterior of the filament while single-stranded (ss)DNA is stabiized in the filament's interior. The ATP-DnaA-oriC complex binds and stabilizes one strand of the AT-rich DNA unwinding element (DUE), permitting loading of DNA polymerase. After initiation quickly degrades to an ADP-DnaA complex that is not apt for DNA replication. Binds acidic phospholipids. This chain is Chromosomal replication initiator protein DnaA, found in Bradyrhizobium sp. (strain BTAi1 / ATCC BAA-1182).